The following is a 588-amino-acid chain: Aspartate--tRNA ligase (588 aa).

Residue Glu174 participates in L-aspartate binding. An aspartate region spans residues 198–201 (QLFK). Arg220 serves as a coordination point for L-aspartate. ATP-binding positions include 220 to 222 (RDE) and Gln229. His448 lines the L-aspartate pocket. Glu482 contributes to the ATP binding site. L-aspartate is bound at residue Arg489. Position 534–537 (534–537 (GIDR)) interacts with ATP.

It belongs to the class-II aminoacyl-tRNA synthetase family. Type 1 subfamily. Homodimer.

It localises to the cytoplasm. It carries out the reaction tRNA(Asp) + L-aspartate + ATP = L-aspartyl-tRNA(Asp) + AMP + diphosphate. Catalyzes the attachment of L-aspartate to tRNA(Asp) in a two-step reaction: L-aspartate is first activated by ATP to form Asp-AMP and then transferred to the acceptor end of tRNA(Asp). The chain is Aspartate--tRNA ligase from Xanthomonas campestris pv. campestris (strain B100).